The primary structure comprises 330 residues: UPF0353 protein MAP_3434 (330 aa).

Transmembrane regions (helical) follow at residues 21 to 41 (GMLL…VVQA) and 63 to 83 (LPIA…ATPT). The VWFA domain occupies 94–289 (VIMLVIDMSQ…GELQKSYNAI (196 aa)). A helical membrane pass occupies residues 304 to 324 (AGWLRLGVLTALIATALALLI).

The protein belongs to the UPF0353 family.

The protein localises to the cell membrane. The protein is UPF0353 protein MAP_3434 of Mycolicibacterium paratuberculosis (strain ATCC BAA-968 / K-10) (Mycobacterium paratuberculosis).